Here is a 251-residue protein sequence, read N- to C-terminus: 4-hydroxy-tetrahydrodipicolinate reductase (251 aa).

8–13 provides a ligand contact to NAD(+); the sequence is GALGRM. Arg-36 contributes to the NADP(+) binding site. Residues 89 to 91 and 113 to 116 each bind NAD(+); these read GTT and TTNF. The active-site Proton donor/acceptor is His-145. His-146 contacts (S)-2,3,4,5-tetrahydrodipicolinate. Residue Lys-149 is the Proton donor of the active site. Residue 155-156 coordinates (S)-2,3,4,5-tetrahydrodipicolinate; sequence GT.

The protein belongs to the DapB family.

It localises to the cytoplasm. It catalyses the reaction (S)-2,3,4,5-tetrahydrodipicolinate + NAD(+) + H2O = (2S,4S)-4-hydroxy-2,3,4,5-tetrahydrodipicolinate + NADH + H(+). The catalysed reaction is (S)-2,3,4,5-tetrahydrodipicolinate + NADP(+) + H2O = (2S,4S)-4-hydroxy-2,3,4,5-tetrahydrodipicolinate + NADPH + H(+). It participates in amino-acid biosynthesis; L-lysine biosynthesis via DAP pathway; (S)-tetrahydrodipicolinate from L-aspartate: step 4/4. In terms of biological role, catalyzes the conversion of 4-hydroxy-tetrahydrodipicolinate (HTPA) to tetrahydrodipicolinate. The chain is 4-hydroxy-tetrahydrodipicolinate reductase from Methanocorpusculum labreanum (strain ATCC 43576 / DSM 4855 / Z).